The chain runs to 125 residues: Small ribosomal subunit protein uS12m (125 aa).

Disordered regions lie at residues 1–29 (MPTKNQLIRHGREEKQRTDRTRASDQCPQ) and 105–125 (LGIPDRRKGRSKYGAERPKSK). Positions 10-23 (HGREEKQRTDRTRA) are enriched in basic and acidic residues.

The protein belongs to the universal ribosomal protein uS12 family.

The protein resides in the mitochondrion. Its function is as follows. Protein S12 is involved in the translation initiation step. This is Small ribosomal subunit protein uS12m (RPS12) from Oryza sativa subsp. japonica (Rice).